We begin with the raw amino-acid sequence, 284 residues long: Homeobox protein SIX1 (284 aa).

The homeobox DNA-binding region spans 124–183 (GEETSYCFKEKSRGVLREWYAHNPYPSPREKRELAEATGLTTTQVSNWFKNRRQRDRAAE). The tract at residues 168 to 271 (VSNWFKNRRQ…AHQHQLQDSL (104 aa)) is disordered. Basic and acidic residues predominate over residues 179–190 (DRAAEAKERENT). Residues 242 to 271 (RSSNYSLPGLTASQPSHGLQAHQHQLQDSL) are compositionally biased toward polar residues.

This sequence belongs to the SIX/Sine oculis homeobox family. As to quaternary structure, interacts with DACH1. Interacts with EYA1. Interacts with EYA2. Interacts with CDH1. Interacts with TBX18. Interacts with CEBPA. Interacts with CEBPB. Interacts with EBF2. In terms of processing, phosphorylated during interphase; becomes hyperphosphorylated during mitosis. Hyperphosphorylation impairs binding to promoter elements. Ubiquitinated by the anaphase promoting complex (APC), leading to its proteasomal degradation.

It is found in the nucleus. The protein localises to the cytoplasm. Transcription factor that is involved in the regulation of cell proliferation, apoptosis and embryonic development. Plays an important role in the development of several organs, including kidney, muscle and inner ear. Depending on context, functions as a transcriptional repressor or activator. Lacks an activation domain, and requires interaction with EYA family members for transcription activation. Mediates nuclear translocation of EYA1 and EYA2. Binds the 5'-TCA[AG][AG]TTNC-3' motif present in the MEF3 element in the MYOG promoter and CIDEA enhancer. Regulates the expression of numerous genes, including MYC, CCNA1, CCND1 and EZR. Acts as an activator of the IGFBP5 promoter, probably coactivated by EYA2. Repression of precursor cell proliferation in myoblasts is switched to activation through recruitment of EYA3 to the SIX1-DACH1 complex. During myogenesis, seems to act together with EYA2 and DACH2. Regulates the expression of CCNA1. Promotes brown adipocyte differentiation. The polypeptide is Homeobox protein SIX1 (SIX1) (Lagothrix lagotricha (Brown woolly monkey)).